A 233-amino-acid chain; its full sequence is Uridylate kinase (233 aa).

ATP is bound by residues 8–11 (KLSG), glycine 51, and arginine 55. UMP-binding positions include aspartate 68 and 129-136 (TSNPFFTT). Residues threonine 156, tyrosine 162, and aspartate 165 each coordinate ATP.

This sequence belongs to the UMP kinase family. In terms of assembly, homohexamer.

The protein resides in the cytoplasm. It catalyses the reaction UMP + ATP = UDP + ADP. It participates in pyrimidine metabolism; CTP biosynthesis via de novo pathway; UDP from UMP (UMPK route): step 1/1. Inhibited by UTP. Catalyzes the reversible phosphorylation of UMP to UDP. This chain is Uridylate kinase, found in Pseudothermotoga lettingae (strain ATCC BAA-301 / DSM 14385 / NBRC 107922 / TMO) (Thermotoga lettingae).